The primary structure comprises 930 residues: Protein translocase subunit SecA (930 aa).

ATP contacts are provided by residues Q87, 105-109, and D515; that span reads GEGKT. Positions 914, 916, 925, and 926 each coordinate Zn(2+).

It belongs to the SecA family. Monomer and homodimer. Part of the essential Sec protein translocation apparatus which comprises SecA, SecYEG and auxiliary proteins SecDF-YajC and YidC. Zn(2+) serves as cofactor.

The protein resides in the cell inner membrane. It is found in the cytoplasm. It catalyses the reaction ATP + H2O + cellular proteinSide 1 = ADP + phosphate + cellular proteinSide 2.. Its function is as follows. Part of the Sec protein translocase complex. Interacts with the SecYEG preprotein conducting channel. Has a central role in coupling the hydrolysis of ATP to the transfer of proteins into and across the cell membrane, serving both as a receptor for the preprotein-SecB complex and as an ATP-driven molecular motor driving the stepwise translocation of polypeptide chains across the membrane. This Cupriavidus metallidurans (strain ATCC 43123 / DSM 2839 / NBRC 102507 / CH34) (Ralstonia metallidurans) protein is Protein translocase subunit SecA.